A 110-amino-acid polypeptide reads, in one-letter code: Large ribosomal subunit protein uL22 (110 aa).

Belongs to the universal ribosomal protein uL22 family. Part of the 50S ribosomal subunit.

Its function is as follows. This protein binds specifically to 23S rRNA; its binding is stimulated by other ribosomal proteins, e.g. L4, L17, and L20. It is important during the early stages of 50S assembly. It makes multiple contacts with different domains of the 23S rRNA in the assembled 50S subunit and ribosome. Functionally, the globular domain of the protein is located near the polypeptide exit tunnel on the outside of the subunit, while an extended beta-hairpin is found that lines the wall of the exit tunnel in the center of the 70S ribosome. The polypeptide is Large ribosomal subunit protein uL22 (Exiguobacterium sibiricum (strain DSM 17290 / CCUG 55495 / CIP 109462 / JCM 13490 / 255-15)).